The primary structure comprises 1859 residues: DNA-directed RNA polymerase subunit beta'' (1859 aa).

Cys286, Cys359, Cys366, and Cys369 together coordinate Zn(2+).

Belongs to the RNA polymerase beta' chain family. RpoC2 subfamily. In plastids the minimal PEP RNA polymerase catalytic core is composed of four subunits: alpha, beta, beta', and beta''. When a (nuclear-encoded) sigma factor is associated with the core the holoenzyme is formed, which can initiate transcription. Zn(2+) is required as a cofactor.

It is found in the plastid. It localises to the chloroplast. The enzyme catalyses RNA(n) + a ribonucleoside 5'-triphosphate = RNA(n+1) + diphosphate. In terms of biological role, DNA-dependent RNA polymerase catalyzes the transcription of DNA into RNA using the four ribonucleoside triphosphates as substrates. The chain is DNA-directed RNA polymerase subunit beta'' from Oltmannsiellopsis viridis (Marine flagellate).